Reading from the N-terminus, the 716-residue chain is Exocyst complex component 8 (716 aa).

Phosphoserine is present on S15. Low complexity predominate over residues 110–119 (STGEDTAGAG). The segment at 110 to 149 (STGEDTAGAGPRERGAAQAGFLPGPAGVPREGPGTGEEGK) is disordered. The 101-residue stretch at 173–273 (YLVYNGDLVE…WLEVLEETKR (101 aa)) folds into the PH domain. Basic and acidic residues predominate over residues 275-284 (LSDKRRREQE). Positions 275–319 (LSDKRRREQEEAAALRAPPPVTSKGSNPFEDEAEEELATPEAEEE) are disordered. Residues 303–319 (FEDEAEEELATPEAEEE) show a composition bias toward acidic residues. The residue at position 313 (T313) is a Phosphothreonine.

It belongs to the EXO84 family. The exocyst complex is composed of EXOC1, EXOC2, EXOC3, EXOC4, EXOC5, EXOC6, EXOC7 and EXOC8. Interacts (via PH domain) with GTP-bound RALA and RALB. Interacts with SH3BP1; required for the localization of both SH3BP1 and the exocyst to the leading edge of migrating cells.

It localises to the cytoplasm. The protein localises to the perinuclear region. Its subcellular location is the cell projection. It is found in the growth cone. In terms of biological role, component of the exocyst complex involved in the docking of exocytic vesicles with fusion sites on the plasma membrane. This is Exocyst complex component 8 (Exoc8) from Rattus norvegicus (Rat).